We begin with the raw amino-acid sequence, 326 residues long: Glyceraldehyde-3-phosphate dehydrogenase, cytosolic (326 aa).

Residues 2–3, D24, and R71 contribute to the NAD(+) site; that span reads RI. Residues 142–144, T173, 202–203, and R225 each bind D-glyceraldehyde 3-phosphate; these read SCT and TG. Catalysis depends on C143, which acts as the Nucleophile. Residue N307 coordinates NAD(+).

This sequence belongs to the glyceraldehyde-3-phosphate dehydrogenase family.

Its subcellular location is the cytoplasm. The enzyme catalyses D-glyceraldehyde 3-phosphate + phosphate + NAD(+) = (2R)-3-phospho-glyceroyl phosphate + NADH + H(+). Its pathway is carbohydrate degradation; glycolysis; pyruvate from D-glyceraldehyde 3-phosphate: step 1/5. Functionally, key enzyme in glycolysis that catalyzes the first step of the pathway by converting D-glyceraldehyde 3-phosphate (G3P) into 3-phospho-D-glyceroyl phosphate. Essential for the maintenance of cellular ATP levels and carbohydrate metabolism. The sequence is that of Glyceraldehyde-3-phosphate dehydrogenase, cytosolic (GAPC) from Nicotiana tabacum (Common tobacco).